Consider the following 248-residue polypeptide: Triosephosphate isomerase (248 aa).

Residue 9-11 (NWK) participates in substrate binding. His94 (electrophile) is an active-site residue. Catalysis depends on Glu166, which acts as the Proton acceptor. Residues Gly172, Ser212, and 233-234 (GG) contribute to the substrate site.

The protein belongs to the triosephosphate isomerase family. Homodimer.

It is found in the cytoplasm. The enzyme catalyses D-glyceraldehyde 3-phosphate = dihydroxyacetone phosphate. Its pathway is carbohydrate biosynthesis; gluconeogenesis. It participates in carbohydrate degradation; glycolysis; D-glyceraldehyde 3-phosphate from glycerone phosphate: step 1/1. Its function is as follows. Involved in the gluconeogenesis. Catalyzes stereospecifically the conversion of dihydroxyacetone phosphate (DHAP) to D-glyceraldehyde-3-phosphate (G3P). The chain is Triosephosphate isomerase from Clostridium perfringens (strain ATCC 13124 / DSM 756 / JCM 1290 / NCIMB 6125 / NCTC 8237 / Type A).